The following is a 334-amino-acid chain: Ketol-acid reductoisomerase (NADP(+)) (334 aa).

The KARI N-terminal Rossmann domain maps to 2-181 (TKVYYDQSVE…GATRAGVIET (180 aa)). NADP(+) is bound by residues 25–28 (YGSQ), R48, S52, and 82–85 (DEIQ). H107 is an active-site residue. NADP(+) is bound at residue G133. Positions 182–327 (TFKEETETDL…RELRKMMPFI (146 aa)) constitute a KARI C-terminal knotted domain. Positions 190, 194, 226, and 230 each coordinate Mg(2+). Substrate is bound at residue S251.

Belongs to the ketol-acid reductoisomerase family. The cofactor is Mg(2+).

The enzyme catalyses (2R)-2,3-dihydroxy-3-methylbutanoate + NADP(+) = (2S)-2-acetolactate + NADPH + H(+). It carries out the reaction (2R,3R)-2,3-dihydroxy-3-methylpentanoate + NADP(+) = (S)-2-ethyl-2-hydroxy-3-oxobutanoate + NADPH + H(+). Its pathway is amino-acid biosynthesis; L-isoleucine biosynthesis; L-isoleucine from 2-oxobutanoate: step 2/4. It functions in the pathway amino-acid biosynthesis; L-valine biosynthesis; L-valine from pyruvate: step 2/4. In terms of biological role, involved in the biosynthesis of branched-chain amino acids (BCAA). Catalyzes an alkyl-migration followed by a ketol-acid reduction of (S)-2-acetolactate (S2AL) to yield (R)-2,3-dihydroxy-isovalerate. In the isomerase reaction, S2AL is rearranged via a Mg-dependent methyl migration to produce 3-hydroxy-3-methyl-2-ketobutyrate (HMKB). In the reductase reaction, this 2-ketoacid undergoes a metal-dependent reduction by NADPH to yield (R)-2,3-dihydroxy-isovalerate. The sequence is that of Ketol-acid reductoisomerase (NADP(+)) from Staphylococcus haemolyticus (strain JCSC1435).